The primary structure comprises 211 residues: MDAPGAPAPAAAPSSARKELKIVIVGDGGCGKTSLLMVYCQGSFPEHYAPSVFEKYTASVTVGNKEVTLNLYDTAGQEDYDRLRPLSYQNTHLVLICYDVMNPTSYDNVLIKWFPEVTHFCRGIPTVLIGCKTDLRKDKEQLRKLRAAQLEPITYTQGLNACEQMRGALYLECSAKFRENVEDVFREAAKVALSALKKAQRQKKHRICLLL.

At Met1 the chain carries N-acetylmethionine. 26 to 33 (GDGGCGKT) contacts GTP. An Effector region motif is present at residues 48-56 (YAPSVFEKY). Residues 73 to 77 (DTAGQ) and 131 to 134 (CKTD) each bind GTP. Cys208 is modified (cysteine methyl ester). Cys208 is lipidated: S-geranylgeranyl cysteine. The propeptide at 209-211 (LLL) is removed in mature form.

It belongs to the small GTPase superfamily. Rho family.

It is found in the cell membrane. Its subcellular location is the cytoplasm. The protein localises to the cytoskeleton. Plasma membrane-associated small GTPase which cycles between an active GTP-bound and an inactive GDP-bound state. Causes the formation of thin, actin-rich surface projections called filopodia. Functions cooperatively with CDC42 and Rac to generate additional structures, increasing the diversity of actin-based morphology. The protein is Rho-related GTP-binding protein RhoF (Rhof) of Mus musculus (Mouse).